A 546-amino-acid chain; its full sequence is CTP synthase (546 aa).

Residues 1-269 form an amidoligase domain region; the sequence is MNSNTKIIFV…DAKLVELLNL (269 aa). Serine 16 lines the CTP pocket. Serine 16 lines the UTP pocket. ATP is bound by residues 17–22 and aspartate 74; that span reads SLGKGV. Mg(2+)-binding residues include aspartate 74 and glutamate 143. Residues 150–152, 190–195, and lysine 226 each bind CTP; these read DIE and KTKPTQ. UTP is bound by residues 190–195 and lysine 226; that span reads KTKPTQ. The region spanning 294–546 is the Glutamine amidotransferase type-1 domain; it reads IIAMVGKYVS…IQAAIENSNN (253 aa). L-glutamine is bound at residue glycine 356. The Nucleophile; for glutamine hydrolysis role is filled by cysteine 383. L-glutamine-binding positions include 384 to 387, glutamate 407, and arginine 474; that span reads LGMQ. Residues histidine 519 and glutamate 521 contribute to the active site.

This sequence belongs to the CTP synthase family. As to quaternary structure, homotetramer.

It carries out the reaction UTP + L-glutamine + ATP + H2O = CTP + L-glutamate + ADP + phosphate + 2 H(+). The enzyme catalyses L-glutamine + H2O = L-glutamate + NH4(+). The catalysed reaction is UTP + NH4(+) + ATP = CTP + ADP + phosphate + 2 H(+). It participates in pyrimidine metabolism; CTP biosynthesis via de novo pathway; CTP from UDP: step 2/2. Allosterically activated by GTP, when glutamine is the substrate; GTP has no effect on the reaction when ammonia is the substrate. The allosteric effector GTP functions by stabilizing the protein conformation that binds the tetrahedral intermediate(s) formed during glutamine hydrolysis. Inhibited by the product CTP, via allosteric rather than competitive inhibition. In terms of biological role, catalyzes the ATP-dependent amination of UTP to CTP with either L-glutamine or ammonia as the source of nitrogen. Regulates intracellular CTP levels through interactions with the four ribonucleotide triphosphates. This chain is CTP synthase, found in Francisella tularensis subsp. holarctica (strain FTNF002-00 / FTA).